Here is a 572-residue protein sequence, read N- to C-terminus: Cytochrome P450 monooxygenase xilC (572 aa).

Cys515 is a heme binding site.

It belongs to the cytochrome P450 family. It depends on heme as a cofactor.

It participates in secondary metabolite biosynthesis. Cytochrome P450 monooxygenase; part of the gene cluster that mediates the biosynthesis of the 6-methyl-2-pyrone derivative xylariolide D. XilC hydroxylates the 5-alkyl-6-methyl-2-pyrone backbone called prexylariolide D, produced by the highly reducing polyketide synthase xilA, on its side chain to form xylariolide D. The chain is Cytochrome P450 monooxygenase xilC from Penicillium rubens (strain ATCC 28089 / DSM 1075 / NRRL 1951 / Wisconsin 54-1255) (Penicillium chrysogenum).